The sequence spans 199 residues: Recombination protein RecR (199 aa).

The C4-type zinc-finger motif lies at 58–73; it reads CKKCFNLTSEEECEIC. The Toprim domain occupies 81–175; it reads KIICVVAETK…KVTRIAYGLP (95 aa).

The protein belongs to the RecR family.

In terms of biological role, may play a role in DNA repair. It seems to be involved in an RecBC-independent recombinational process of DNA repair. It may act with RecF and RecO. In Prochlorococcus marinus subsp. pastoris (strain CCMP1986 / NIES-2087 / MED4), this protein is Recombination protein RecR.